Reading from the N-terminus, the 376-residue chain is Chaperone protein DnaJ (376 aa).

Residues 5–70 (DFYEVLGVGR…DKKAAYDQFG (66 aa)) form the J domain. Residues 132–210 (GLSKELRIPT…CHGEGRVEKS (79 aa)) form a CR-type zinc finger. Residues C145, C148, C162, C165, C184, C187, C198, and C201 each contribute to the Zn(2+) site. CXXCXGXG motif repeat units lie at residues 145–152 (CEPCDGSG), 162–169 (CGTCHGQG), 184–191 (CPTCHGRG), and 198–205 (CNKCHGEG).

Belongs to the DnaJ family. As to quaternary structure, homodimer. It depends on Zn(2+) as a cofactor.

The protein localises to the cytoplasm. Its function is as follows. Participates actively in the response to hyperosmotic and heat shock by preventing the aggregation of stress-denatured proteins and by disaggregating proteins, also in an autonomous, DnaK-independent fashion. Unfolded proteins bind initially to DnaJ; upon interaction with the DnaJ-bound protein, DnaK hydrolyzes its bound ATP, resulting in the formation of a stable complex. GrpE releases ADP from DnaK; ATP binding to DnaK triggers the release of the substrate protein, thus completing the reaction cycle. Several rounds of ATP-dependent interactions between DnaJ, DnaK and GrpE are required for fully efficient folding. Also involved, together with DnaK and GrpE, in the DNA replication of plasmids through activation of initiation proteins. The protein is Chaperone protein DnaJ of Shewanella piezotolerans (strain WP3 / JCM 13877).